Here is a 447-residue protein sequence, read N- to C-terminus: UDP-N-acetylmuramoylalanine--D-glutamate ligase (447 aa).

Gly-130–Thr-136 contacts ATP.

Belongs to the MurCDEF family.

The protein localises to the cytoplasm. It catalyses the reaction UDP-N-acetyl-alpha-D-muramoyl-L-alanine + D-glutamate + ATP = UDP-N-acetyl-alpha-D-muramoyl-L-alanyl-D-glutamate + ADP + phosphate + H(+). It functions in the pathway cell wall biogenesis; peptidoglycan biosynthesis. In terms of biological role, cell wall formation. Catalyzes the addition of glutamate to the nucleotide precursor UDP-N-acetylmuramoyl-L-alanine (UMA). This chain is UDP-N-acetylmuramoylalanine--D-glutamate ligase, found in Oleidesulfovibrio alaskensis (strain ATCC BAA-1058 / DSM 17464 / G20) (Desulfovibrio alaskensis).